Here is a 985-residue protein sequence, read N- to C-terminus: Phosphoenolpyruvate carboxylase (985 aa).

Positions 1–17 (MTQSAARRASSRATPAR) are enriched in low complexity. Residues 1 to 55 (MTQSAARRASSRATPARKTPPAPASQTPAPSPGGTAGTALGPTSRRSSGSAAAKD) are disordered. Residues His-193 and Lys-634 contribute to the active site.

The protein belongs to the PEPCase type 1 family. Mg(2+) is required as a cofactor.

It catalyses the reaction oxaloacetate + phosphate = phosphoenolpyruvate + hydrogencarbonate. In terms of biological role, forms oxaloacetate, a four-carbon dicarboxylic acid source for the tricarboxylic acid cycle. The chain is Phosphoenolpyruvate carboxylase from Ralstonia nicotianae (strain ATCC BAA-1114 / GMI1000) (Ralstonia solanacearum).